A 487-amino-acid chain; its full sequence is L-asparagine permease 2 (487 aa).

A run of 12 helical transmembrane segments spans residues 26–46 (QLQM…GAGG), 50–70 (SAGP…FLIL), 98–118 (VAFV…IVDT), 133–153 (PIPQ…MNLI), 163–183 (FWAS…GTVF), 214–234 (IVLV…VGIA), 256–276 (IACF…YTAY), 290–310 (IGID…ALSS), 341–361 (TGVP…GIIL), 369–389 (AFEI…ATIV), 414–434 (SPFS…LMYF), and 440–460 (PWMI…WYLV).

It belongs to the amino acid-polyamine-organocation (APC) superfamily. Amino acid transporter (AAT) (TC 2.A.3.1) family.

The protein resides in the cell membrane. Its function is as follows. Dual function in both nitrogen assimilation and in protection against acid stress during infection. Involved in asparagine uptake. The sequence is that of L-asparagine permease 2 (ansP2) from Mycobacterium bovis (strain ATCC BAA-935 / AF2122/97).